Reading from the N-terminus, the 374-residue chain is Ribosomal RNA large subunit methyltransferase G (374 aa).

This sequence belongs to the methyltransferase superfamily. RlmG family.

The protein localises to the cytoplasm. It carries out the reaction guanosine(1835) in 23S rRNA + S-adenosyl-L-methionine = N(2)-methylguanosine(1835) in 23S rRNA + S-adenosyl-L-homocysteine + H(+). Functionally, specifically methylates the guanine in position 1835 (m2G1835) of 23S rRNA. The polypeptide is Ribosomal RNA large subunit methyltransferase G (Pseudomonas fluorescens (strain Pf0-1)).